A 230-amino-acid polypeptide reads, in one-letter code: Fibrillarin-like rRNA/tRNA 2'-O-methyltransferase (230 aa).

Residues 87–88 (TT), 105–106 (EF), 130–131 (DA), and 150–153 (DVAQ) each bind S-adenosyl-L-methionine.

This sequence belongs to the methyltransferase superfamily. Fibrillarin family. As to quaternary structure, interacts with nop5. Component of box C/D small ribonucleoprotein (sRNP) particles that contain rpl7ae, FlpA and nop5, plus a guide RNA.

In terms of biological role, involved in pre-rRNA and tRNA processing. Utilizes the methyl donor S-adenosyl-L-methionine to catalyze the site-specific 2'-hydroxyl methylation of ribose moieties in rRNA and tRNA. Site specificity is provided by a guide RNA that base pairs with the substrate. Methylation occurs at a characteristic distance from the sequence involved in base pairing with the guide RNA. The polypeptide is Fibrillarin-like rRNA/tRNA 2'-O-methyltransferase (Methanococcus maripaludis (strain C6 / ATCC BAA-1332)).